An 869-amino-acid polypeptide reads, in one-letter code: Phosphatidylethanolamine N-methyltransferase (869 aa).

S2 bears the N-acetylserine mark. Topologically, residues 2–55 (SSCKTTLSEMVGSVTKDRGTINVEARTRSSNVTFKPPVTHDMVRSLFDPTLKKS) are lumenal. Residues 56-76 (LLEKCIALAIISNFFICYWVF) form a helical membrane-spanning segment. Topologically, residues 77-86 (QRFGLQFTKY) are cytoplasmic. The chain crosses the membrane as a helical span at residues 87-107 (FFLVQYLFWRIAYNLGIGLVL). Over 108–187 (HYQSHYETLT…EINVWLIFRQ (80 aa)) the chain is Lumenal. Residues 188–208 (FVDLILMQDFVTYIIYVYLSI) form a helical membrane-spanning segment. Residues 209–212 (PYSW) lie on the Cytoplasmic side of the membrane. Residues 213-233 (VQIFNWRSLLGVILILFNIWV) form a helical membrane-spanning segment. The Lumenal segment spans residues 234-258 (KLDAHRVVKDYAWYWGDFFFLEESE). A helical transmembrane segment spans residues 259–279 (LIFDGVFNISPHPMYSIGYLG). The Cytoplasmic portion of the chain corresponds to 280 to 291 (YYGLSLICNDYK). Residues 292–310 (VLLVSVFGHYSQFLFLKYV) traverse the membrane as a helical segment. Over 311–362 (ENPHIERTYGDGTDSDSQMNSRIDDLISKENYDYSRPLINMGLSFNNFNKLR) the chain is Lumenal. A helical membrane pass occupies residues 363 to 383 (FTDYFTIGTVAALMLGTIMNA). Topologically, residues 384 to 389 (RFINLN) are cytoplasmic. A helical membrane pass occupies residues 390 to 410 (YLFITVFVTKLVSWLFISTIL). At 411–439 (YKQSQSKWFTRLFLENGYTQVYSYEQWQF) the chain is on the lumenal side. Residues 440–460 (IYNYYLVLTYTLMIIHTGLQI) form a helical membrane-spanning segment. Residues 461–463 (WSN) lie on the Cytoplasmic side of the membrane. The chain crosses the membrane as a helical span at residues 464 to 484 (FSNINNSQLIFGLILVALQTW). Topologically, residues 485 to 534 (CDKETRLAISDFGWFYGDFFLSNYISTRKLTSQGIYRYLNHPEAVLGVVG) are lumenal. Residues 535 to 555 (VWGTVLMTNFAVTNIILAVLW) form a helical membrane-spanning segment. The Cytoplasmic segment spans residues 556-869 (TLTNFILVKF…DIKQTLDSLA (314 aa)).

The protein belongs to the class VI-like SAM-binding methyltransferase superfamily. CHO2 family.

The protein localises to the endoplasmic reticulum membrane. The catalysed reaction is a 1,2-diacyl-sn-glycero-3-phosphoethanolamine + S-adenosyl-L-methionine = a 1,2-diacyl-sn-glycero-3-phospho-N-methylethanolamine + S-adenosyl-L-homocysteine + H(+). It functions in the pathway phospholipid metabolism; phosphatidylcholine biosynthesis. Catalyzes the first step of the methylation pathway of phosphatidylcholine biosynthesis, the SAM-dependent methylation of phosphatidylethanolamine (PE) to phosphatidylmonomethylethanolamine (PMME). Preferentially converts di-C16:1 substrates. The protein is Phosphatidylethanolamine N-methyltransferase of Saccharomyces cerevisiae (strain ATCC 204508 / S288c) (Baker's yeast).